The primary structure comprises 218 residues: UPF0126 membrane protein SCO4104 (218 aa).

7 helical membrane passes run 8-28, 37-57, 64-84, 91-111, 118-138, 154-174, and 179-199; these read LLALDLTGTFAFGLNGALTAV, GVVVLGMITALGGGVIRDVLI, AFLDWRYYTLAAAGGLLAFAV, LEPAITVLDAVGLSTFAVIGA, GLAVVPAMLLGVITAVGGGTI, LYAIPALAGAAVTVATTETGV, and AALGAAAVCFLIRMLGLHFGI.

It belongs to the UPF0126 family.

Its subcellular location is the cell membrane. In Streptomyces coelicolor (strain ATCC BAA-471 / A3(2) / M145), this protein is UPF0126 membrane protein SCO4104.